Here is a 67-residue protein sequence, read N- to C-terminus: Large ribosomal subunit protein bL31 (67 aa).

This sequence belongs to the bacterial ribosomal protein bL31 family. Type A subfamily. Part of the 50S ribosomal subunit.

Functionally, binds the 23S rRNA. The polypeptide is Large ribosomal subunit protein bL31 (Leptospira borgpetersenii serovar Hardjo-bovis (strain JB197)).